A 688-amino-acid chain; its full sequence is Elongation factor G (688 aa).

A tr-type G domain is found at Glu-8 to Leu-282. GTP is bound by residues Ala-17–Thr-24, Asp-81–His-85, and Asn-135–Asp-138. The tract at residues Leu-282 to Asn-305 is disordered.

It belongs to the TRAFAC class translation factor GTPase superfamily. Classic translation factor GTPase family. EF-G/EF-2 subfamily.

Its subcellular location is the cytoplasm. Catalyzes the GTP-dependent ribosomal translocation step during translation elongation. During this step, the ribosome changes from the pre-translocational (PRE) to the post-translocational (POST) state as the newly formed A-site-bound peptidyl-tRNA and P-site-bound deacylated tRNA move to the P and E sites, respectively. Catalyzes the coordinated movement of the two tRNA molecules, the mRNA and conformational changes in the ribosome. The polypeptide is Elongation factor G (Clostridium kluyveri (strain NBRC 12016)).